Here is a 278-residue protein sequence, read N- to C-terminus: Indole-3-glycerol phosphate synthase (278 aa).

It belongs to the TrpC family.

The catalysed reaction is 1-(2-carboxyphenylamino)-1-deoxy-D-ribulose 5-phosphate + H(+) = (1S,2R)-1-C-(indol-3-yl)glycerol 3-phosphate + CO2 + H2O. Its pathway is amino-acid biosynthesis; L-tryptophan biosynthesis; L-tryptophan from chorismate: step 4/5. In Stutzerimonas stutzeri (strain A1501) (Pseudomonas stutzeri), this protein is Indole-3-glycerol phosphate synthase.